A 448-amino-acid polypeptide reads, in one-letter code: Probable glycine dehydrogenase (decarboxylating) subunit 1 (448 aa).

It belongs to the GcvP family. N-terminal subunit subfamily. The glycine cleavage system is composed of four proteins: P, T, L and H. In this organism, the P 'protein' is a heterodimer of two subunits.

It catalyses the reaction N(6)-[(R)-lipoyl]-L-lysyl-[glycine-cleavage complex H protein] + glycine + H(+) = N(6)-[(R)-S(8)-aminomethyldihydrolipoyl]-L-lysyl-[glycine-cleavage complex H protein] + CO2. Functionally, the glycine cleavage system catalyzes the degradation of glycine. The P protein binds the alpha-amino group of glycine through its pyridoxal phosphate cofactor; CO(2) is released and the remaining methylamine moiety is then transferred to the lipoamide cofactor of the H protein. This Staphylococcus aureus (strain Mu3 / ATCC 700698) protein is Probable glycine dehydrogenase (decarboxylating) subunit 1.